The sequence spans 390 residues: Tryptophan synthase beta chain 2 (390 aa).

Lysine 83 carries the N6-(pyridoxal phosphate)lysine modification.

The protein belongs to the TrpB family. Tetramer of two alpha and two beta chains. Requires pyridoxal 5'-phosphate as cofactor.

It catalyses the reaction (1S,2R)-1-C-(indol-3-yl)glycerol 3-phosphate + L-serine = D-glyceraldehyde 3-phosphate + L-tryptophan + H2O. The protein operates within amino-acid biosynthesis; L-tryptophan biosynthesis; L-tryptophan from chorismate: step 5/5. The beta subunit is responsible for the synthesis of L-tryptophan from indole and L-serine. The sequence is that of Tryptophan synthase beta chain 2 (trpB2) from Methanothermobacter marburgensis (strain ATCC BAA-927 / DSM 2133 / JCM 14651 / NBRC 100331 / OCM 82 / Marburg) (Methanobacterium thermoautotrophicum).